A 229-amino-acid polypeptide reads, in one-letter code: ATP-dependent Clp protease proteolytic subunit (229 aa).

S101 serves as the catalytic Nucleophile. The active site involves H126.

This sequence belongs to the peptidase S14 family. As to quaternary structure, component of the chloroplastic Clp protease core complex.

Its subcellular location is the plastid. The protein localises to the chloroplast stroma. It carries out the reaction Hydrolysis of proteins to small peptides in the presence of ATP and magnesium. alpha-casein is the usual test substrate. In the absence of ATP, only oligopeptides shorter than five residues are hydrolyzed (such as succinyl-Leu-Tyr-|-NHMec, and Leu-Tyr-Leu-|-Tyr-Trp, in which cleavage of the -Tyr-|-Leu- and -Tyr-|-Trp bonds also occurs).. Its function is as follows. Cleaves peptides in various proteins in a process that requires ATP hydrolysis. Has a chymotrypsin-like activity. Plays a major role in the degradation of misfolded proteins. This chain is ATP-dependent Clp protease proteolytic subunit, found in Mesostigma viride (Green alga).